The following is a 428-amino-acid chain: L-rhamnonate dehydratase (428 aa).

2 residues coordinate substrate: histidine 56 and arginine 82. Mg(2+) is bound by residues aspartate 249, glutamate 275, and glutamate 303. Histidine 352 serves as the catalytic Proton acceptor. Glutamate 372 provides a ligand contact to substrate.

Belongs to the mandelate racemase/muconate lactonizing enzyme family. RhamD subfamily. As to quaternary structure, homooctamer; tetramer of dimers. It depends on Mg(2+) as a cofactor.

It carries out the reaction L-rhamnonate = 2-dehydro-3-deoxy-L-rhamnonate + H2O. Catalyzes the dehydration of L-rhamnonate to 2-keto-3-deoxy-L-rhamnonate (KDR). The protein is L-rhamnonate dehydratase of Shigella sonnei (strain Ss046).